The sequence spans 564 residues: Excitatory amino acid transporter 4 (564 aa).

Residues 1–55 (MSSHGNSLFLRESGQRLGRVGWLQRLQESLQQRALRTRLRLQTMTREHVLRFLRR) are Cytoplasmic-facing. The residue at position 2 (S2) is a Phosphoserine. Helical transmembrane passes span 56–76 (NAFI…AFAL), 99–119 (MLQM…MASL), and 133–153 (VYYM…VTII). N-linked (GlcNAc...) asparagine glycosylation is found at N216, N232, and N239. Helical transmembrane passes span 262–285 (SANG…IGGV), 295–322 (FFDS…LFLI), and 344–365 (LTVI…YFLI). The discontinuously helical intramembrane region spans 371 to 401 (FPFIGGVLQALITAMGTSSSSATLPITFRCL). 388-390 (SSS) contributes to the L-aspartate binding site. The chain crosses the membrane as a helical span at residues 411–437 (ITRFVLPVGATVNMDGTALYEALAAIF). Na(+) is bound by residues G419, T421, and N423. L-aspartate-binding positions include T427, 468–472 (IPQAG), D501, and N508. An intramembrane region (discontinuously helical) is located at residues 451–484 (ITTISITATAASVGAAGIPQAGLVTMVIVLTSVG). The helical transmembrane segment at 498-519 (WFLDRLRTMTNVLGDSIGAAVI) threads the bilayer. Na(+)-binding residues include N508 and D512.

It belongs to the dicarboxylate/amino acid:cation symporter (DAACS) (TC 2.A.23) family. SLC1A6 subfamily. In terms of assembly, homotrimer. Detected in brain, cerebellum and hippocampus.

It localises to the cell membrane. The enzyme catalyses K(+)(in) + L-glutamate(out) + 3 Na(+)(out) + H(+)(out) = K(+)(out) + L-glutamate(in) + 3 Na(+)(in) + H(+)(in). It carries out the reaction K(+)(in) + L-aspartate(out) + 3 Na(+)(out) + H(+)(out) = K(+)(out) + L-aspartate(in) + 3 Na(+)(in) + H(+)(in). The catalysed reaction is D-aspartate(out) + K(+)(in) + 3 Na(+)(out) + H(+)(out) = D-aspartate(in) + K(+)(out) + 3 Na(+)(in) + H(+)(in). Its function is as follows. Sodium-dependent, high-affinity amino acid transporter that mediates the uptake of L-glutamate and also L-aspartate and D-aspartate. Functions as a symporter that transports one amino acid molecule together with two or three Na(+) ions and one proton, in parallel with the counter-transport of one K(+) ion. Mediates Cl(-) flux that is not coupled to amino acid transport; this avoids the accumulation of negative charges due to aspartate and Na(+) symport. Plays a redundant role in the rapid removal of released glutamate from the synaptic cleft, which is essential for terminating the postsynaptic action of glutamate. This is Excitatory amino acid transporter 4 (SLC1A6) from Canis lupus familiaris (Dog).